A 193-amino-acid polypeptide reads, in one-letter code: UPF0397 protein PA0141 (193 aa).

5 consecutive transmembrane segments (helical) span residues V11–I31, F43–G63, F69–L89, I109–P129, and G147–S167.

This sequence belongs to the UPF0397 family.

The protein localises to the cell membrane. The protein is UPF0397 protein PA0141 of Phytoplasma australiense.